The chain runs to 367 residues: Anthranilate phosphoribosyltransferase (367 aa).

Residues 1–21 (MALSSESSAASAARRPSGGPA) are compositionally biased toward low complexity. A disordered region spans residues 1 to 24 (MALSSESSAASAARRPSGGPATSW). 5-phospho-alpha-D-ribose 1-diphosphate contacts are provided by residues Gly104, 107–108 (GD), Thr112, 114–117 (NLST), 132–140 (KHGNRAASS), and Gly144. Gly104 contributes to the anthranilate binding site. Mg(2+) is bound at residue Ser116. Asn135 is a binding site for anthranilate. Arg190 provides a ligand contact to anthranilate. Positions 248 and 249 each coordinate Mg(2+).

The protein belongs to the anthranilate phosphoribosyltransferase family. As to quaternary structure, homodimer. The cofactor is Mg(2+).

It catalyses the reaction N-(5-phospho-beta-D-ribosyl)anthranilate + diphosphate = 5-phospho-alpha-D-ribose 1-diphosphate + anthranilate. The protein operates within amino-acid biosynthesis; L-tryptophan biosynthesis; L-tryptophan from chorismate: step 2/5. In terms of biological role, catalyzes the transfer of the phosphoribosyl group of 5-phosphorylribose-1-pyrophosphate (PRPP) to anthranilate to yield N-(5'-phosphoribosyl)-anthranilate (PRA). The chain is Anthranilate phosphoribosyltransferase from Mycolicibacterium paratuberculosis (strain ATCC BAA-968 / K-10) (Mycobacterium paratuberculosis).